Here is a 657-residue protein sequence, read N- to C-terminus: Pyoverdine export ATP-binding/permease protein PvdT (657 aa).

The ABC transporter domain occupies 6–245 (IDLQDIRKSY…ASTNPGALQA (240 aa)). 43–50 (GASGSGKS) contacts ATP. A run of 4 helical transmembrane segments spans residues 285–305 (ALTL…LAVG), 539–559 (IAAI…LMTV), 590–610 (LSVV…GVLI), and 620–640 (LVAI…FGFM).

The protein belongs to the ABC transporter superfamily. Macrolide exporter (TC 3.A.1.122) family. In terms of assembly, part of the tripartite efflux system PvdRT-OpmQ, which is composed of an inner membrane component with both ATPase and permease domains, PvdT, a periplasmic membrane fusion protein, PvdR, and an outer membrane component, OpmQ.

It is found in the cell inner membrane. Part of the tripartite efflux system PvdRT-OpmQ required for the secretion into the extracellular milieu of the siderophore pyoverdine (PVD), which is involved in iron acquisition. This subunit binds PVD and drives its secretion by hydrolyzing ATP. The system is responsible for export of newly synthesized PVD after the final steps of biosynthesis have taken place in the periplasm. It is also responsible for recycling of PVD after internalization of ferri-PVD into the periplasm by the outer-membrane receptor FpvA and release of iron from PVD, thus making PVD available for new cycles of iron uptake. In Pseudomonas fluorescens (strain Pf0-1), this protein is Pyoverdine export ATP-binding/permease protein PvdT.